Reading from the N-terminus, the 188-residue chain is Elongation factor P (188 aa).

It belongs to the elongation factor P family.

The protein localises to the cytoplasm. It participates in protein biosynthesis; polypeptide chain elongation. Its function is as follows. Involved in peptide bond synthesis. Stimulates efficient translation and peptide-bond synthesis on native or reconstituted 70S ribosomes in vitro. Probably functions indirectly by altering the affinity of the ribosome for aminoacyl-tRNA, thus increasing their reactivity as acceptors for peptidyl transferase. This Phocaeicola vulgatus (strain ATCC 8482 / DSM 1447 / JCM 5826 / CCUG 4940 / NBRC 14291 / NCTC 11154) (Bacteroides vulgatus) protein is Elongation factor P.